The sequence spans 67 residues: Cell division protein ZapB (67 aa).

The stretch at 3 to 59 (LELLSQLETKIQTALETIELLKLELDEEKEKAANLAEQNHQLKQELSSWNDKITGLV) forms a coiled coil.

Belongs to the ZapB family. As to quaternary structure, homodimer. The ends of the coiled-coil dimer bind to each other, forming polymers. Interacts with FtsZ.

The protein resides in the cytoplasm. In terms of biological role, non-essential, abundant cell division factor that is required for proper Z-ring formation. It is recruited early to the divisome by direct interaction with FtsZ, stimulating Z-ring assembly and thereby promoting cell division earlier in the cell cycle. Its recruitment to the Z-ring requires functional FtsA or ZipA. This is Cell division protein ZapB from Shewanella amazonensis (strain ATCC BAA-1098 / SB2B).